Reading from the N-terminus, the 156-residue chain is RNA polymerase sigma factor SigS (156 aa).

The Polymerase core binding motif lies at Glu-29–Ile-44. A DNA-binding region (H-T-H motif) is located at residues Gln-126–Met-145.

The protein belongs to the sigma-70 factor family.

Its function is as follows. Sigma factors are initiation factors that promote the attachment of RNA polymerase to specific initiation sites and are then released. Sigma-S contributes to the protection against external stress, thus playing a role in cellular fitness and survival. This chain is RNA polymerase sigma factor SigS (sigS), found in Staphylococcus aureus (strain NCTC 8325 / PS 47).